Here is a 431-residue protein sequence, read N- to C-terminus: Probable sodium/metabolite cotransporter BASS3, chloroplastic (431 aa).

Residues M1–V70 constitute a chloroplast transit peptide. 9 helical membrane passes run F110–P130, L145–F165, V169–V189, T198–A218, I238–V258, V261–L281, V288–I308, L325–F345, and V387–W407.

It belongs to the bile acid:sodium symporter (BASS) (TC 2.A.28) family.

It is found in the membrane. Its subcellular location is the plastid. It localises to the chloroplast envelope. May function as sodium-coupled metabolite transporter across the chloroplast envelope. This chain is Probable sodium/metabolite cotransporter BASS3, chloroplastic (BASS3), found in Arabidopsis thaliana (Mouse-ear cress).